The sequence spans 92 residues: Small ribosomal subunit protein uS19 (92 aa).

Belongs to the universal ribosomal protein uS19 family.

In terms of biological role, protein S19 forms a complex with S13 that binds strongly to the 16S ribosomal RNA. This is Small ribosomal subunit protein uS19 from Nostoc sp. (strain PCC 7120 / SAG 25.82 / UTEX 2576).